Consider the following 532-residue polypeptide: Probable cytochrome P450 524A1 (532 aa).

The helical transmembrane segment at 8–28 (FIIFILLAALAVFVSEATSKV) threads the bilayer. Cys478 contributes to the heme binding site.

This sequence belongs to the cytochrome P450 family. The cofactor is heme.

It localises to the membrane. In Dictyostelium discoideum (Social amoeba), this protein is Probable cytochrome P450 524A1 (cyp524A1).